The following is a 246-amino-acid chain: Pyridoxine 5'-phosphate synthase (246 aa).

Asparagine 12 is a binding site for 3-amino-2-oxopropyl phosphate. Residue 14 to 15 (DH) coordinates 1-deoxy-D-xylulose 5-phosphate. Arginine 23 contributes to the 3-amino-2-oxopropyl phosphate binding site. Histidine 48 acts as the Proton acceptor in catalysis. Positions 50 and 55 each coordinate 1-deoxy-D-xylulose 5-phosphate. Glutamate 75 serves as the catalytic Proton acceptor. 1-deoxy-D-xylulose 5-phosphate is bound at residue threonine 105. Histidine 196 (proton donor) is an active-site residue. Residues glycine 197 and 218–219 (GH) contribute to the 3-amino-2-oxopropyl phosphate site.

The protein belongs to the PNP synthase family. In terms of assembly, homooctamer; tetramer of dimers.

The protein localises to the cytoplasm. The catalysed reaction is 3-amino-2-oxopropyl phosphate + 1-deoxy-D-xylulose 5-phosphate = pyridoxine 5'-phosphate + phosphate + 2 H2O + H(+). The protein operates within cofactor biosynthesis; pyridoxine 5'-phosphate biosynthesis; pyridoxine 5'-phosphate from D-erythrose 4-phosphate: step 5/5. In terms of biological role, catalyzes the complicated ring closure reaction between the two acyclic compounds 1-deoxy-D-xylulose-5-phosphate (DXP) and 3-amino-2-oxopropyl phosphate (1-amino-acetone-3-phosphate or AAP) to form pyridoxine 5'-phosphate (PNP) and inorganic phosphate. The sequence is that of Pyridoxine 5'-phosphate synthase from Pseudomonas syringae pv. syringae (strain B728a).